Here is a 198-residue protein sequence, read N- to C-terminus: HTH-type transcriptional repressor DhaR (198 aa).

The HTH tetR-type domain maps to 4 to 64; that stretch reads TPVRQHLVEK…QVLQEFFSDL (61 aa).

Transcriptional repressor for the dhaA haloalkane dehalogenase gene. This chain is HTH-type transcriptional repressor DhaR (dhaR), found in Mycobacterium sp. (strain GP1).